A 436-amino-acid polypeptide reads, in one-letter code: Adenylosuccinate synthetase (436 aa).

GTP-binding positions include 12 to 18 (GDEGKGK) and 40 to 42 (GHT). The active-site Proton acceptor is aspartate 13. Aspartate 13 and glycine 40 together coordinate Mg(2+). IMP contacts are provided by residues 13 to 16 (DEGK), 38 to 41 (NAGH), threonine 128, arginine 142, glutamine 223, threonine 238, and arginine 302. Histidine 41 functions as the Proton donor in the catalytic mechanism. Residue 298 to 304 (TTTGRRR) participates in substrate binding. GTP-binding positions include arginine 304, 330–332 (KLD), and 412–414 (SLG).

This sequence belongs to the adenylosuccinate synthetase family. In terms of assembly, homodimer. Requires Mg(2+) as cofactor.

The protein resides in the cytoplasm. The enzyme catalyses IMP + L-aspartate + GTP = N(6)-(1,2-dicarboxyethyl)-AMP + GDP + phosphate + 2 H(+). The protein operates within purine metabolism; AMP biosynthesis via de novo pathway; AMP from IMP: step 1/2. In terms of biological role, plays an important role in the de novo pathway of purine nucleotide biosynthesis. Catalyzes the first committed step in the biosynthesis of AMP from IMP. The polypeptide is Adenylosuccinate synthetase (Prochlorococcus marinus (strain MIT 9312)).